We begin with the raw amino-acid sequence, 413 residues long: uncharacterized protein (413 aa).

K265 bears the N6-(pyridoxal phosphate)lysine mark.

Belongs to the threonine aldolase family. Pyridoxal 5'-phosphate serves as cofactor.

This is an uncharacterized protein from Caenorhabditis elegans.